A 207-amino-acid chain; its full sequence is GTP cyclohydrolase 1 (207 aa).

Cys-94, His-97, and Cys-167 together coordinate Zn(2+).

Belongs to the GTP cyclohydrolase I family. In terms of assembly, toroid-shaped homodecamer, composed of two pentamers of five dimers.

It catalyses the reaction GTP + H2O = 7,8-dihydroneopterin 3'-triphosphate + formate + H(+). It functions in the pathway cofactor biosynthesis; 7,8-dihydroneopterin triphosphate biosynthesis; 7,8-dihydroneopterin triphosphate from GTP: step 1/1. This is GTP cyclohydrolase 1 from Thermobifida fusca (strain YX).